We begin with the raw amino-acid sequence, 407 residues long: Arginine biosynthesis bifunctional protein ArgJ (407 aa).

The substrate site is built by Thr155, Lys181, Thr192, Glu278, Asn402, and Thr407. Catalysis depends on Thr192, which acts as the Nucleophile.

The protein belongs to the ArgJ family. Heterotetramer of two alpha and two beta chains.

The protein resides in the cytoplasm. It carries out the reaction N(2)-acetyl-L-ornithine + L-glutamate = N-acetyl-L-glutamate + L-ornithine. The catalysed reaction is L-glutamate + acetyl-CoA = N-acetyl-L-glutamate + CoA + H(+). It functions in the pathway amino-acid biosynthesis; L-arginine biosynthesis; L-ornithine and N-acetyl-L-glutamate from L-glutamate and N(2)-acetyl-L-ornithine (cyclic): step 1/1. Its pathway is amino-acid biosynthesis; L-arginine biosynthesis; N(2)-acetyl-L-ornithine from L-glutamate: step 1/4. Functionally, catalyzes two activities which are involved in the cyclic version of arginine biosynthesis: the synthesis of N-acetylglutamate from glutamate and acetyl-CoA as the acetyl donor, and of ornithine by transacetylation between N(2)-acetylornithine and glutamate. In Thiobacillus denitrificans (strain ATCC 25259 / T1), this protein is Arginine biosynthesis bifunctional protein ArgJ.